Reading from the N-terminus, the 217-residue chain is Large ribosomal subunit protein uL1 (217 aa).

It belongs to the universal ribosomal protein uL1 family. In terms of assembly, part of the 50S ribosomal subunit.

Binds directly to 23S rRNA. Probably involved in E site tRNA release. Functionally, protein L1 is also a translational repressor protein, it controls the translation of its operon by binding to its mRNA. This is Large ribosomal subunit protein uL1 from Hyperthermus butylicus (strain DSM 5456 / JCM 9403 / PLM1-5).